A 484-amino-acid polypeptide reads, in one-letter code: Cobyric acid synthase (484 aa).

Residues 248 to 435 (VLKVIVPVLP…LHGLFEGSQS (188 aa)) form the GATase cobBQ-type domain. Cys-329 serves as the catalytic Nucleophile. His-427 is a catalytic residue.

The protein belongs to the CobB/CobQ family. CobQ subfamily.

It participates in cofactor biosynthesis; adenosylcobalamin biosynthesis. Its function is as follows. Catalyzes amidations at positions B, D, E, and G on adenosylcobyrinic A,C-diamide. NH(2) groups are provided by glutamine, and one molecule of ATP is hydrogenolyzed for each amidation. The polypeptide is Cobyric acid synthase (Pseudomonas putida (strain ATCC 700007 / DSM 6899 / JCM 31910 / BCRC 17059 / LMG 24140 / F1)).